A 382-amino-acid chain; its full sequence is Chaperone protein DnaJ (382 aa).

The 65-residue stretch at 5–69 folds into the J domain; sequence DLYGVLGVAK…QKRANYDQSG (65 aa). The disordered stretch occupies residues 104–123; sequence QFFGGGGGQRNPNAPRPGRD. A CR-type zinc finger spans residues 138-220; the sequence is GKKTKIKYNR…CGGSGHEEER (83 aa). Zn(2+) is bound by residues cysteine 151, cysteine 154, cysteine 168, cysteine 171, cysteine 194, cysteine 197, cysteine 208, and cysteine 211. 4 CXXCXGXG motif repeats span residues 151–158, 168–175, 194–201, and 208–215; these read CHTCGGNG, CHQCGGSG, CPVCHGTG, and CPTCGGSG. The interval 358–382 is disordered; sequence ASGESVTGSGKGNLFNKMRDKFNEN.

The protein belongs to the DnaJ family. As to quaternary structure, homodimer. Requires Zn(2+) as cofactor.

The protein resides in the cytoplasm. Participates actively in the response to hyperosmotic and heat shock by preventing the aggregation of stress-denatured proteins and by disaggregating proteins, also in an autonomous, DnaK-independent fashion. Unfolded proteins bind initially to DnaJ; upon interaction with the DnaJ-bound protein, DnaK hydrolyzes its bound ATP, resulting in the formation of a stable complex. GrpE releases ADP from DnaK; ATP binding to DnaK triggers the release of the substrate protein, thus completing the reaction cycle. Several rounds of ATP-dependent interactions between DnaJ, DnaK and GrpE are required for fully efficient folding. Also involved, together with DnaK and GrpE, in the DNA replication of plasmids through activation of initiation proteins. This chain is Chaperone protein DnaJ, found in Levilactobacillus brevis (strain ATCC 367 / BCRC 12310 / CIP 105137 / JCM 1170 / LMG 11437 / NCIMB 947 / NCTC 947) (Lactobacillus brevis).